A 225-amino-acid polypeptide reads, in one-letter code: Methylthioribulose-1-phosphate dehydratase (225 aa).

Zn(2+)-binding residues include His106 and His108.

This sequence belongs to the aldolase class II family. MtnB subfamily. The cofactor is Zn(2+).

It carries out the reaction 5-(methylsulfanyl)-D-ribulose 1-phosphate = 5-methylsulfanyl-2,3-dioxopentyl phosphate + H2O. It participates in amino-acid biosynthesis; L-methionine biosynthesis via salvage pathway; L-methionine from S-methyl-5-thio-alpha-D-ribose 1-phosphate: step 2/6. Functionally, catalyzes the dehydration of methylthioribulose-1-phosphate (MTRu-1-P) into 2,3-diketo-5-methylthiopentyl-1-phosphate (DK-MTP-1-P). This is Methylthioribulose-1-phosphate dehydratase from Xanthomonas oryzae pv. oryzae (strain KACC10331 / KXO85).